A 308-amino-acid chain; its full sequence is MGSVKIGTRDSQLALWQAEWVKRKLEEYYPEREFVLVPMKTKGDKILDVPLAKIGDKGLFTKELEVGLLNGEIDCAVHSLKDLPTVLPPGLEIAAFCEREEPRDVFLSKDGTPLGSLPAGSIIGTSSLRRKAQLQNYRSDLSFADLRGNLQTRWRKLQESDMAGIVLAAAGVKRLGWEDRITEYISEEIMLSAVGQGAIAVEIAAQRADVREMLDLLNHGDTERAVKAERALLYRLEGGCQIPIGAWAVTEQQQIVLKGMVASLDGQRILKVTLSGEHPEELGRQAADLLIAQGALEILQEIRTPLEK.

At C240 the chain carries S-(dipyrrolylmethanemethyl)cysteine.

This sequence belongs to the HMBS family. Monomer. Dipyrromethane is required as a cofactor.

The enzyme catalyses 4 porphobilinogen + H2O = hydroxymethylbilane + 4 NH4(+). It functions in the pathway porphyrin-containing compound metabolism; protoporphyrin-IX biosynthesis; coproporphyrinogen-III from 5-aminolevulinate: step 2/4. Functionally, tetrapolymerization of the monopyrrole PBG into the hydroxymethylbilane pre-uroporphyrinogen in several discrete steps. The polypeptide is Porphobilinogen deaminase (Desulfitobacterium hafniense (strain DSM 10664 / DCB-2)).